The sequence spans 372 residues: Queuine tRNA-ribosyltransferase (372 aa).

Asp92 (proton acceptor) is an active-site residue. Substrate is bound by residues 92-96 (DSGGY), Asp146, Gln188, and Gly215. An RNA binding region spans residues 246-252 (GIGSLKE). Catalysis depends on Asp265, which acts as the Nucleophile. The tract at residues 270–274 (TRLGR) is RNA binding; important for wobble base 34 recognition. The Zn(2+) site is built by Cys303, Cys305, Cys308, and His334.

This sequence belongs to the queuine tRNA-ribosyltransferase family. As to quaternary structure, homodimer. Within each dimer, one monomer is responsible for RNA recognition and catalysis, while the other monomer binds to the replacement base PreQ1. The cofactor is Zn(2+).

The catalysed reaction is 7-aminomethyl-7-carbaguanine + guanosine(34) in tRNA = 7-aminomethyl-7-carbaguanosine(34) in tRNA + guanine. Its pathway is tRNA modification; tRNA-queuosine biosynthesis. Catalyzes the base-exchange of a guanine (G) residue with the queuine precursor 7-aminomethyl-7-deazaguanine (PreQ1) at position 34 (anticodon wobble position) in tRNAs with GU(N) anticodons (tRNA-Asp, -Asn, -His and -Tyr). Catalysis occurs through a double-displacement mechanism. The nucleophile active site attacks the C1' of nucleotide 34 to detach the guanine base from the RNA, forming a covalent enzyme-RNA intermediate. The proton acceptor active site deprotonates the incoming PreQ1, allowing a nucleophilic attack on the C1' of the ribose to form the product. After dissociation, two additional enzymatic reactions on the tRNA convert PreQ1 to queuine (Q), resulting in the hypermodified nucleoside queuosine (7-(((4,5-cis-dihydroxy-2-cyclopenten-1-yl)amino)methyl)-7-deazaguanosine). This is Queuine tRNA-ribosyltransferase from Prochlorococcus marinus (strain MIT 9515).